A 1411-amino-acid chain; its full sequence is Protein RhsB (1411 aa).

Tandem repeats lie at residues 330–352 (GKQV…HRHT), 353–374 (GRPE…LNPA), 375–417 (GLSY…EHAD), 418–438 (GSVT…TDAA), 439–460 (GRTT…TTPD), 461–481 (GRAS…TGPD), 482–502 (GLEL…TAPD), 503–525 (GDIT…EDAT), 526–546 (GSRK…TDCS), 547–567 (GYVT…HREE), 568–588 (GLSQ…KDTQ), 589–609 (GHET…IAPD), 610–629 (GSRN…TTQG), 630–650 (GLTR…TSEN), 651–671 (GSHT…TGFD), 672–691 (GRTQ…SEDE), 692–711 (GLVT…RTVK), 712–734 (GETA…HISE), 735–758 (GHRV…QTVH), 808–828 (GDTP…LRSF), 829–850 (GRYE…HLNS), 851–871 (LLSD…ISSP), 872–894 (RQTR…TAAN), 895–930 (LDIR…NRIA), 931–959 (RDAH…VIRT), 960–984 (DDER…TQYE), 985–1019 (EPLV…MSLS), and 1162–1186 (GATA…HQLQ). The interval 330-1186 (GKQVRSFTYD…LNEENPHQLQ (857 aa)) is 28 X approximate tandem repeats.

It belongs to the RHS family.

Functionally, rhs elements have a nonessential function. They may play an important role in the natural ecology of the cell. The protein is Protein RhsB (rhsB) of Escherichia coli (strain K12).